We begin with the raw amino-acid sequence, 141 residues long: S-adenosylmethionine decarboxylase proenzyme (141 aa).

Residue Ser63 is the Schiff-base intermediate with substrate; via pyruvic acid of the active site. Residue Ser63 is modified to Pyruvic acid (Ser); by autocatalysis. Residue His68 is the Proton acceptor; for processing activity of the active site. The active-site Proton donor; for catalytic activity is Cys83.

Belongs to the prokaryotic AdoMetDC family. Type 1 subfamily. As to quaternary structure, heterotetramer of two alpha and two beta chains arranged as a dimer of alpha/beta heterodimers. Pyruvate is required as a cofactor. Post-translationally, is synthesized initially as an inactive proenzyme. Formation of the active enzyme involves a self-maturation process in which the active site pyruvoyl group is generated from an internal serine residue via an autocatalytic post-translational modification. Two non-identical subunits are generated from the proenzyme in this reaction, and the pyruvate is formed at the N-terminus of the alpha chain, which is derived from the carboxyl end of the proenzyme. The post-translation cleavage follows an unusual pathway, termed non-hydrolytic serinolysis, in which the side chain hydroxyl group of the serine supplies its oxygen atom to form the C-terminus of the beta chain, while the remainder of the serine residue undergoes an oxidative deamination to produce ammonia and the pyruvoyl group blocking the N-terminus of the alpha chain.

It carries out the reaction S-adenosyl-L-methionine + H(+) = S-adenosyl 3-(methylsulfanyl)propylamine + CO2. Its pathway is amine and polyamine biosynthesis; S-adenosylmethioninamine biosynthesis; S-adenosylmethioninamine from S-adenosyl-L-methionine: step 1/1. Catalyzes the decarboxylation of S-adenosylmethionine to S-adenosylmethioninamine (dcAdoMet), the propylamine donor required for the synthesis of the polyamines spermine and spermidine from the diamine putrescine. In Thermococcus onnurineus (strain NA1), this protein is S-adenosylmethionine decarboxylase proenzyme.